Here is a 304-residue protein sequence, read N- to C-terminus: Protease HtpX homolog (304 aa).

The next 2 helical transmembrane spans lie at 14 to 34 (IFIILGFFIFVLMVGAAIGII) and 39 to 59 (YLNGLILAAVIGAFYILIMVM). Residue H144 participates in Zn(2+) binding. E145 is an active-site residue. H148 provides a ligand contact to Zn(2+). 2 consecutive transmembrane segments (helical) span residues 159-179 (IAIALVAVIAILSDLAMRMIF) and 202-222 (AIIYIVALIFVILAPIIATAI). E231 serves as a coordination point for Zn(2+).

It belongs to the peptidase M48B family. Zn(2+) is required as a cofactor.

It is found in the cell membrane. The protein is Protease HtpX homolog of Listeria monocytogenes serotype 4b (strain CLIP80459).